Here is a 136-residue protein sequence, read N- to C-terminus: Organic hydroperoxide resistance protein OhrB (136 aa).

This sequence belongs to the OsmC/Ohr family.

Its function is as follows. Involved in organic hydroperoxide resistance. This is Organic hydroperoxide resistance protein OhrB (ohrB) from Bacillus subtilis (strain 168).